Consider the following 517-residue polypeptide: MQVTTRFISAIVSFCLFASFTLAENSARATPGSDLLVLTEKKFKSFIESHPLVLVEFFAPWCLHSQILRPHLEEAASILKEHNVPVVQIDCEANSMVCLQQTINTYPTLKIFKNGRIFDGQVYRGVKITDEITQYMIQLYEASVIYLNSEDEIQPYLENATLPVVINRGLTGLNETYQEVALDLAEDYVFLSLLDSEDKSLSIHLPNTTEPILFDGNVDSLVGNSVALTQWLKVVILPYFTDIEPDLFPKYISSNLPLAYFFYTSEEELEDYTDLFTQLGKENRGQINFIALNSTMFPHHVRFLNMREQFPLFAIHNMINNLKYGLPQLPEEEYAKLEKPQPLDRDMIVQLVKDYREGTAKPIVKSEEIPKEQKSNVYKIVGKTHDDIVHDDDKDVLVKYYATWCIHSKRFAPIYEEIANVLASDESVRDKILIAEVDSGANDILSFPVTGYPTIALYPAGNNSKPIIFNKIRNLEDVFEFIKESGTHHIDGQAIYDKLHQAKDSEVSTEDTVHDEL.

The first 29 residues, Met-1–Ala-29, serve as a signal peptide directing secretion. A Thioredoxin 1 domain is found at Thr-30–Glu-141. Asn-159, Asn-174, Asn-207, Asn-293, and Asn-462 each carry an N-linked (GlcNAc...) asparagine glycan. The 133-residue stretch at Tyr-355–Thr-487 folds into the Thioredoxin 2 domain. A Prevents secretion from ER motif is present at residues His-514 to Leu-517.

Belongs to the protein disulfide isomerase family. Interacts with EPS1. Post-translationally, may have O-linked mannose residues.

The protein resides in the endoplasmic reticulum lumen. The catalysed reaction is Catalyzes the rearrangement of -S-S- bonds in proteins.. Its function is as follows. Probably interacts with nascent polypeptides in the endoplasmic reticulum. It is an essential gene only in the absence of PDI. Its native disulfide isomerase activity is very low. The chain is Protein disulfide-isomerase EUG1 (EUG1) from Saccharomyces cerevisiae (strain ATCC 204508 / S288c) (Baker's yeast).